Reading from the N-terminus, the 338-residue chain is Lipoate-protein ligase A (338 aa).

The 188-residue stretch at 29–216 (SPDQRVLFLW…AFFNYYDEKV (188 aa)) folds into the BPL/LPL catalytic domain. ATP is bound by residues Arg-71, 76 to 79 (GAVF), and Lys-134. Lys-134 serves as a coordination point for (R)-lipoate.

Belongs to the LplA family. In terms of assembly, monomer.

Its subcellular location is the cytoplasm. It catalyses the reaction L-lysyl-[lipoyl-carrier protein] + (R)-lipoate + ATP = N(6)-[(R)-lipoyl]-L-lysyl-[lipoyl-carrier protein] + AMP + diphosphate + H(+). The protein operates within protein modification; protein lipoylation via exogenous pathway; protein N(6)-(lipoyl)lysine from lipoate: step 1/2. It participates in protein modification; protein lipoylation via exogenous pathway; protein N(6)-(lipoyl)lysine from lipoate: step 2/2. Its function is as follows. Catalyzes both the ATP-dependent activation of exogenously supplied lipoate to lipoyl-AMP and the transfer of the activated lipoyl onto the lipoyl domains of lipoate-dependent enzymes. The sequence is that of Lipoate-protein ligase A from Yersinia enterocolitica serotype O:8 / biotype 1B (strain NCTC 13174 / 8081).